We begin with the raw amino-acid sequence, 363 residues long: Histidinol-phosphate aminotransferase (363 aa).

Lysine 226 is subject to N6-(pyridoxal phosphate)lysine.

It belongs to the class-II pyridoxal-phosphate-dependent aminotransferase family. Histidinol-phosphate aminotransferase subfamily. As to quaternary structure, homodimer. Pyridoxal 5'-phosphate serves as cofactor.

The enzyme catalyses L-histidinol phosphate + 2-oxoglutarate = 3-(imidazol-4-yl)-2-oxopropyl phosphate + L-glutamate. It participates in amino-acid biosynthesis; L-histidine biosynthesis; L-histidine from 5-phospho-alpha-D-ribose 1-diphosphate: step 7/9. This is Histidinol-phosphate aminotransferase from Campylobacter lari (strain RM2100 / D67 / ATCC BAA-1060).